The sequence spans 390 residues: Magnesium-protoporphyrin IX monomethyl ester [oxidative] cyclase (390 aa).

This sequence belongs to the AcsF family. The cofactor is Fe cation.

The enzyme catalyses Mg-protoporphyrin IX 13-monomethyl ester + 3 NADPH + 3 O2 + 2 H(+) = 3,8-divinyl protochlorophyllide a + 3 NADP(+) + 5 H2O. The protein operates within porphyrin-containing compound metabolism; chlorophyll biosynthesis (light-independent). Functionally, catalyzes the formation of the isocyclic ring in chlorophyll biosynthesis. Mediates the cyclase reaction, which results in the formation of divinylprotochlorophyllide (Pchlide) characteristic of all chlorophylls from magnesium-protoporphyrin IX 13-monomethyl ester (MgPMME). The protein is Magnesium-protoporphyrin IX monomethyl ester [oxidative] cyclase of Prochlorococcus marinus (strain MIT 9215).